We begin with the raw amino-acid sequence, 84 residues long: Mu-conotoxin-like Cal 12.2a (84 aa).

The signal sequence occupies residues 1–19 (MKLTCVLVVLLLVLPFGDL). Residues 20–42 (ITTSNTEDNKRGATPWQNSLKAR) constitute a propeptide that is removed on maturation. Cystine bridges form between Cys-45-Cys-57, Cys-52-Cys-65, Cys-59-Cys-70, and Cys-64-Cys-76. Position 48 is a 4-hydroxyproline (Pro-48). Residue Trp-72 is modified to 6'-bromotryptophan. Residue Pro-77 is modified to 4-hydroxyproline. Trp-81 carries the post-translational modification 6'-bromotryptophan.

Belongs to the conotoxin O1 superfamily. Expressed by the venom duct.

The protein localises to the secreted. Its function is as follows. Mu-conotoxins block voltage-gated sodium channels. This toxin reversibly blocks voltage-gated sodium channel in cephalopods, with no alteration in the voltage dependence of sodium conductance or on the kinetics of inactivation. The sequence is that of Mu-conotoxin-like Cal 12.2a from Californiconus californicus (California cone).